The sequence spans 180 residues: Large ribosomal subunit protein uL6 (180 aa).

It belongs to the universal ribosomal protein uL6 family. In terms of assembly, part of the 50S ribosomal subunit.

Its function is as follows. This protein binds to the 23S rRNA, and is important in its secondary structure. It is located near the subunit interface in the base of the L7/L12 stalk, and near the tRNA binding site of the peptidyltransferase center. The sequence is that of Large ribosomal subunit protein uL6 from Mycoplasma capricolum subsp. capricolum (strain California kid / ATCC 27343 / NCTC 10154).